The chain runs to 528 residues: NAC domain-containing protein 13 (528 aa).

The 151-residue stretch at 10–160 (LAPGFRFHPT…AYVLYKIYKK (151 aa)) folds into the NAC domain. Residues 107 to 166 (VGEKKTLVFHRGRAPNGERTNWVMHEYTLHKEELKRCGGEDVKDAYVLYKIYKKSGSGPK) mediate DNA binding. The disordered stretch occupies residues 388-419 (EAPGTGDSSEFLNPVPSGISTTNEDDPSKDES). A helical membrane pass occupies residues 499 to 519 (FFCLSIIGALCALFWVIIGTM).

Interacts with RCD1. As to expression, expressed in roots, rosette leaves, shoot apex, stems and flowers.

It localises to the endoplasmic reticulum membrane. The protein localises to the nucleus. In terms of biological role, transcriptional activator activated by proteolytic cleavage through regulated intramembrane proteolysis (RIP). Involved in oxidative stress tolerance by mediating regulation of mitochondrial retrograde signaling during mitochondrial dysfunction. Interacts directly with the mitochondrial dysfunction DNA consensus motif 5'-CTTGNNNNNCA[AC]G-3', a cis-regulatory elements of several mitochondrial retrograde regulation-induced genes, and triggers increased oxidative stress tolerance. The chain is NAC domain-containing protein 13 from Arabidopsis thaliana (Mouse-ear cress).